Reading from the N-terminus, the 284-residue chain is Lipoyl synthase (284 aa).

Positions 36, 41, 47, 62, 66, 69, and 273 each coordinate [4Fe-4S] cluster. Residues 48 to 262 (WGKGTATFMI…RTIGLKKGFR (215 aa)) enclose the Radical SAM core domain.

This sequence belongs to the radical SAM superfamily. Lipoyl synthase family. Requires [4Fe-4S] cluster as cofactor.

It localises to the cytoplasm. The catalysed reaction is [[Fe-S] cluster scaffold protein carrying a second [4Fe-4S](2+) cluster] + N(6)-octanoyl-L-lysyl-[protein] + 2 oxidized [2Fe-2S]-[ferredoxin] + 2 S-adenosyl-L-methionine + 4 H(+) = [[Fe-S] cluster scaffold protein] + N(6)-[(R)-dihydrolipoyl]-L-lysyl-[protein] + 4 Fe(3+) + 2 hydrogen sulfide + 2 5'-deoxyadenosine + 2 L-methionine + 2 reduced [2Fe-2S]-[ferredoxin]. It participates in protein modification; protein lipoylation via endogenous pathway; protein N(6)-(lipoyl)lysine from octanoyl-[acyl-carrier-protein]: step 2/2. In terms of biological role, catalyzes the radical-mediated insertion of two sulfur atoms into the C-6 and C-8 positions of the octanoyl moiety bound to the lipoyl domains of lipoate-dependent enzymes, thereby converting the octanoylated domains into lipoylated derivatives. The chain is Lipoyl synthase from Phocaeicola vulgatus (strain ATCC 8482 / DSM 1447 / JCM 5826 / CCUG 4940 / NBRC 14291 / NCTC 11154) (Bacteroides vulgatus).